The sequence spans 162 residues: Urease subunit beta (162 aa).

A disordered region spans residues 116-162 (WRRSSAAGDAPQELPQVEAAERGRKLDDATDVDTNVGTEEGFEEGRN). Basic and acidic residues predominate over residues 134 to 143 (AAERGRKLDD).

Belongs to the urease beta subunit family. Heterotrimer of UreA (gamma), UreB (beta) and UreC (alpha) subunits. Three heterotrimers associate to form the active enzyme.

The protein resides in the cytoplasm. The enzyme catalyses urea + 2 H2O + H(+) = hydrogencarbonate + 2 NH4(+). It functions in the pathway nitrogen metabolism; urea degradation; CO(2) and NH(3) from urea (urease route): step 1/1. The protein is Urease subunit beta of Corynebacterium glutamicum (strain ATCC 13032 / DSM 20300 / JCM 1318 / BCRC 11384 / CCUG 27702 / LMG 3730 / NBRC 12168 / NCIMB 10025 / NRRL B-2784 / 534).